We begin with the raw amino-acid sequence, 127 residues long: Gonadotropin subunit beta-1 (127 aa).

The N-terminal stretch at 1-22 is a signal peptide; sequence MHLAVTALCLTLAPVLARASTS. 6 cysteine pairs are disulfide-bonded: cysteine 23/cysteine 71, cysteine 37/cysteine 86, cysteine 40/cysteine 124, cysteine 48/cysteine 102, cysteine 52/cysteine 104, and cysteine 107/cysteine 114. Residues asparagine 27 and asparagine 44 are each glycosylated (N-linked (GlcNAc...) asparagine).

This sequence belongs to the glycoprotein hormones subunit beta family. Heterodimer of an alpha and a beta chain.

The protein resides in the secreted. Involved in gametogenesis and steroidogenesis. This chain is Gonadotropin subunit beta-1 (cgba), found in Anguilla japonica (Japanese eel).